Reading from the N-terminus, the 119-residue chain is Methylglyoxal synthase (119 aa).

Residues 1–119 (MRIALIAHDK…GTADLIIRQF (119 aa)) form the MGS-like domain. Substrate contacts are provided by residues His8, Lys12, 34-37 (TGTT), and 54-55 (SG). The active-site Proton donor/acceptor is the Asp60. Residue His87 coordinates substrate.

This sequence belongs to the methylglyoxal synthase family.

The catalysed reaction is dihydroxyacetone phosphate = methylglyoxal + phosphate. Functionally, catalyzes the formation of methylglyoxal from dihydroxyacetone phosphate. This chain is Methylglyoxal synthase, found in Clostridium botulinum (strain Alaska E43 / Type E3).